The sequence spans 196 residues: Putative 3-methyladenine DNA glycosylase (196 aa).

This sequence belongs to the DNA glycosylase MPG family.

This is Putative 3-methyladenine DNA glycosylase from Chlorobium luteolum (strain DSM 273 / BCRC 81028 / 2530) (Pelodictyon luteolum).